The sequence spans 228 residues: Ribulose-phosphate 3-epimerase, cytoplasmic isoform (228 aa).

Ser-12 is a substrate binding site. The a divalent metal cation site is built by His-37, Asp-39, and His-70. The active-site Proton acceptor is Asp-39. Substrate contacts are provided by residues His-70, 150-153 (GFGG), 179-181 (DGG), and 201-202 (GS). Residue Asp-179 participates in a divalent metal cation binding. Asp-179 serves as the catalytic Proton donor.

This sequence belongs to the ribulose-phosphate 3-epimerase family. As to quaternary structure, homodimer. Requires Co(2+) as cofactor. Fe(2+) is required as a cofactor. The cofactor is Mn(2+). It depends on Zn(2+) as a cofactor. As to expression, predominantly accumulates in roots and seedlings.

It localises to the cytoplasm. It catalyses the reaction D-ribulose 5-phosphate = D-xylulose 5-phosphate. It functions in the pathway carbohydrate degradation; pentose phosphate pathway; D-xylulose 5-phosphate from D-ribulose 5-phosphate (non-oxidative stage): step 1/1. In terms of biological role, catalyzes the reversible epimerization of D-ribulose 5-phosphate to D-xylulose 5-phosphate. This Oryza sativa subsp. japonica (Rice) protein is Ribulose-phosphate 3-epimerase, cytoplasmic isoform.